The primary structure comprises 343 residues: Probable dual-specificity RNA methyltransferase RlmN (343 aa).

E91 acts as the Proton acceptor in catalysis. Positions 97–327 (YKHGNSICVS…TTIRREMGSD (231 aa)) constitute a Radical SAM core domain. A disulfide bridge connects residues C104 and C332. The [4Fe-4S] cluster site is built by C111, C115, and C118. S-adenosyl-L-methionine-binding positions include 158–159 (GE), S190, 213–215 (SLH), and N289. The S-methylcysteine intermediate role is filled by C332.

The protein belongs to the radical SAM superfamily. RlmN family. [4Fe-4S] cluster serves as cofactor.

The protein localises to the cytoplasm. The catalysed reaction is adenosine(2503) in 23S rRNA + 2 reduced [2Fe-2S]-[ferredoxin] + 2 S-adenosyl-L-methionine = 2-methyladenosine(2503) in 23S rRNA + 5'-deoxyadenosine + L-methionine + 2 oxidized [2Fe-2S]-[ferredoxin] + S-adenosyl-L-homocysteine. It catalyses the reaction adenosine(37) in tRNA + 2 reduced [2Fe-2S]-[ferredoxin] + 2 S-adenosyl-L-methionine = 2-methyladenosine(37) in tRNA + 5'-deoxyadenosine + L-methionine + 2 oxidized [2Fe-2S]-[ferredoxin] + S-adenosyl-L-homocysteine. Its function is as follows. Specifically methylates position 2 of adenine 2503 in 23S rRNA and position 2 of adenine 37 in tRNAs. In Clostridium novyi (strain NT), this protein is Probable dual-specificity RNA methyltransferase RlmN.